The primary structure comprises 262 residues: Adenosylcobinamide-GDP ribazoletransferase (262 aa).

8 consecutive transmembrane segments (helical) span residues alanine 4 to tryptophan 26, cysteine 37 to serine 57, phenylalanine 59 to alanine 79, valine 112 to tyrosine 132, isoleucine 139 to leucine 159, alanine 183 to isoleucine 203, valine 205 to tryptophan 225, and valine 237 to histidine 257.

This sequence belongs to the CobS family. The cofactor is Mg(2+).

The protein resides in the cell membrane. It catalyses the reaction alpha-ribazole + adenosylcob(III)inamide-GDP = adenosylcob(III)alamin + GMP + H(+). The catalysed reaction is alpha-ribazole 5'-phosphate + adenosylcob(III)inamide-GDP = adenosylcob(III)alamin 5'-phosphate + GMP + H(+). Its pathway is cofactor biosynthesis; adenosylcobalamin biosynthesis; adenosylcobalamin from cob(II)yrinate a,c-diamide: step 7/7. Functionally, joins adenosylcobinamide-GDP and alpha-ribazole to generate adenosylcobalamin (Ado-cobalamin). Also synthesizes adenosylcobalamin 5'-phosphate from adenosylcobinamide-GDP and alpha-ribazole 5'-phosphate. This Geobacillus kaustophilus (strain HTA426) protein is Adenosylcobinamide-GDP ribazoletransferase.